An 822-amino-acid polypeptide reads, in one-letter code: Nose resistant to fluoxetine protein 6 (822 aa).

An N-terminal signal peptide occupies residues 1 to 24; sequence MGNMRRLLIFAVLVILTVISNSKS. Asn236 is a glycosylation site (N-linked (GlcNAc...) asparagine). A run of 3 helical transmembrane segments spans residues 306–326, 617–637, and 655–675; these read LAMFALYLLIATVVLVTFGTL, PYIRCTPFIVGIVVAYLLNAW, and IICWCTSTVLGLYSVFGLYWF.

This sequence belongs to the acyltransferase 3 family. In terms of tissue distribution, in L1 larvae through to adult, hyp3 and hyp5, the most anterior cells in the hypodermis, and in intestine. Other hypodermal cells show weaker expression.

It localises to the membrane. Functionally, plays a role in the uptake of a range of molecules including lipids and xenobiotic compounds from the intestine to surrounding tissues. Mediates transport of lipids from intestine to the reproductive tract. Required for efficient yolk transport into oocytes. Vital for embryonic development. This chain is Nose resistant to fluoxetine protein 6 (nrf-6), found in Caenorhabditis elegans.